The following is a 224-amino-acid chain: 2,5-diamino-6-ribosylamino-4(3H)-pyrimidinone 5'-phosphate reductase (224 aa).

Residues Thr57, Asp61, 82-85 (STAN), Val131, and 153-156 (GASI) each bind NADP(+).

This sequence belongs to the HTP reductase family. As to quaternary structure, homodimer.

It carries out the reaction 2,5-diamino-6-(1-D-ribitylamino)pyrimidin-4(3H)-one 5'-phosphate + NADP(+) = 2,5-diamino-6-(1-D-ribosylamino)pyrimidin-4(3H)-one 5'-phosphate + NADPH + H(+). The catalysed reaction is 2,5-diamino-6-(1-D-ribitylamino)pyrimidin-4(3H)-one 5'-phosphate + NAD(+) = 2,5-diamino-6-(1-D-ribosylamino)pyrimidin-4(3H)-one 5'-phosphate + NADH + H(+). Its pathway is cofactor biosynthesis; riboflavin biosynthesis. Functionally, catalyzes an early step in riboflavin biosynthesis, the NADPH-dependent reduction of the ribose side chain of 2,5-diamino-6-ribosylamino-4(3H)-pyrimidinone 5'-phosphate, yielding 2,5-diamino-6-ribitylamino-4(3H)-pyrimidinone 5'-phosphate. This is 2,5-diamino-6-ribosylamino-4(3H)-pyrimidinone 5'-phosphate reductase (ribD2) from Aquifex aeolicus (strain VF5).